The sequence spans 610 residues: MQQEAAQRESEELQHVQWRPRAVSGWGVPQLLWYLVFLQPIITEVHLRRRNVQFLFIRFSAWQYAGTDKLWAGLVTTLCEGIRRHYGALPFSVYSVLGNKPATRQDCCQSEWHCRRRVCLGLLALLAALGLGVGLLYLSLGGHALGHGSPSGSLLKVFGGAATTLSGSGLLMAVYSVGKHLFVSQRKKIERLVSREKFGSQLGFMCEVKKEVELLTDFLCFLEIYQRRRLRVVLEVTGLDTCYPERVVGVLNAINTLLSDSHAPFIFILVVDPSILAACLESAGNMKGTADNGYLFLNRTVTLPFSVPIMGRRTKLQFLHDAVQSRDDLLYREMTRKPWLPGDAGGESAQLLAVQAQAGTERGQGRIDDEAARRIQEALFCLHDERDCLYEYVPDNVVSMRRIVNTVPITVRLLQQQQQQGDFGGPTPRQAVAWVVLANQWPCRLSWALQCLEDRQQTGGAPEGRARLWDVFRDNSRELHTMTKALQNVLDLDGDPELFERFLGADFPFTVAEAQSLLRCTVNLDHSIRRRMGLIRAVSALKPPSPPKSPTRDTPHAAHRANSASRAPPSGRASGQAGEGHHTGDLAHRGKLWPVACALFRPGQSSPGGP.

Residues 1-414 (MQQEAAQRES…NTVPITVRLL (414 aa)) enclose the KAP NTPase domain. A run of 3 helical transmembrane segments spans residues 22 to 42 (AVSG…QPII), 118 to 138 (VCLG…LLYL), and 157 to 177 (VFGG…VYSV). The tract at residues 540-587 (ALKPPSPPKSPTRDTPHAAHRANSASRAPPSGRASGQAGEGHHTGDLA) is disordered. Residues 560–575 (RANSASRAPPSGRASG) show a composition bias toward low complexity.

It is found in the membrane. The polypeptide is NTPase KAP family P-loop domain-containing protein 1 (NKPD1) (Homo sapiens (Human)).